The chain runs to 841 residues: Probable alpha-glucuronidase A (841 aa).

A signal peptide spans 1–19; it reads MLRLPLVLVWSLWASLTVA. Residues Asn50, Asn104, Asn223, Asn280, Asn311, Asn344, Asn466, Asn528, Asn577, Asn683, Asn724, and Asn733 are each glycosylated (N-linked (GlcNAc...) asparagine).

Belongs to the glycosyl hydrolase 67 family.

Its subcellular location is the secreted. It catalyses the reaction an alpha-D-glucuronoside + H2O = D-glucuronate + an alcohol. Alpha-glucuronidase involved in the hydrolysis of xylan, a major structural heterogeneous polysaccharide found in plant biomass representing the second most abundant polysaccharide in the biosphere, after cellulose. Releases 4-O-methylglucuronic acid from xylan. This Aspergillus terreus (strain NIH 2624 / FGSC A1156) protein is Probable alpha-glucuronidase A (aguA).